We begin with the raw amino-acid sequence, 623 residues long: Glutathione import ATP-binding protein GsiA (623 aa).

2 ABC transporter domains span residues 15 to 269 (VENL…RALL) and 314 to 564 (LRVR…RKLL). ATP-binding positions include 49 to 56 (GESGSGKS) and 357 to 364 (GESGSGKS).

The protein belongs to the ABC transporter superfamily. Glutathione importer (TC 3.A.1.5.11) family. The complex is composed of two ATP-binding proteins (GsiA), two transmembrane proteins (GsiC and GsiD) and a solute-binding protein (GsiB).

The protein localises to the cell inner membrane. The enzyme catalyses glutathione(out) + ATP + H2O = glutathione(in) + ADP + phosphate + H(+). Functionally, part of the ABC transporter complex GsiABCD involved in glutathione import. Responsible for energy coupling to the transport system. In Shigella flexneri serotype 5b (strain 8401), this protein is Glutathione import ATP-binding protein GsiA.